A 134-amino-acid chain; its full sequence is MSWQAYVDDHLMCDIEGHEGHRLTAAAIVGQDGSVWAQSATFPQFKPEEMNGIMTDFNEPGHLAPTGLHLGGTKYMVIQGEAGAVIRGKKGSGGITIKKTGQALVFGIYEEPVTPGKCNMVVERLGDYLLEQGL.

Cysteine 13 and cysteine 118 are oxidised to a cystine. The Involved in PIP2 interaction signature appears at 84–100 (AVIRGKKGSGGITIKKT). Threonine 114 bears the Phosphothreonine mark.

The protein belongs to the profilin family. In terms of assembly, occurs in many kinds of cells as a complex with monomeric actin in a 1:1 ratio. In terms of processing, phosphorylated by MAP kinases.

Its subcellular location is the cytoplasm. It is found in the cytoskeleton. Binds to actin and affects the structure of the cytoskeleton. At high concentrations, profilin prevents the polymerization of actin, whereas it enhances it at low concentrations. This is Profilin-4 from Olea europaea (Common olive).